The sequence spans 593 residues: Mitoguardin 2 (593 aa).

The next 2 helical transmembrane spans lie at 11–31 (MIQA…TTFG) and 42–62 (PGLR…ALAA). 2 disordered regions span residues 103–141 (GYSS…VASM) and 196–231 (SVGQ…SQRK). Low complexity-rich tracts occupy residues 106–116 (SRRVQSPSSKS) and 123–141 (ISSI…VASM). Serine 132 carries the phosphoserine modification. Threonine 206 carries the phosphothreonine modification. Residues serine 220, serine 224, and serine 228 each carry the phosphoserine modification. Threonine 273 carries the post-translational modification Phosphothreonine. Phosphoserine occurs at positions 276 and 295. An FFAT motif is present at residues 292–298 (SFFSATE).

The protein belongs to the mitoguardin family. In terms of assembly, homodimer and heterodimer; forms heterodimers with MIGA1. Interacts with PLD6/MitoPLD. Interacts (via phosphorylated FFAT motif) with MOSPD2, VAPA and VAPB. Post-translationally, phosphorylation at Ser-295 of the FFAT motif activates interaction with MOSPD2, VAPA and VAPB.

It localises to the mitochondrion outer membrane. In terms of biological role, regulator of mitochondrial fusion: acts by forming homo- and heterodimers at the mitochondrial outer membrane and facilitating the formation of PLD6/MitoPLD dimers. May act by regulating phospholipid metabolism via PLD6/MitoPLD. The sequence is that of Mitoguardin 2 from Homo sapiens (Human).